Consider the following 307-residue polypeptide: MTISTLGNQQDDSLVSNAFGFLRFPLNFQPYSSDAEWVITGVPFDMATSGRAGSRHGPAAIRQVSTNLAWESRRWPWDFKLHNCLKVVDCGDVVFNFGDAQDMSDKLQAHAEKVLASGKRMLSFGGDHFITLPLLRAHAKHFGKMALVHFDAHADTYPNGSQFDHGTMFYHAPNEGLIDPHHSVQIGIRTEHGRDNGFTVLDADQVNDRSVDDLLAQIKETVGDMPVYLTFDIDCLDPAFAPGTGTPVIGGLTTDRALKLLRGLQPLNIVGMDVVEVAPAYDQSEITALAGATIALEMLYLQASKKR.

Residues His128, Asp151, His153, Asp155, Asp232, and Asp234 each coordinate Mn(2+).

This sequence belongs to the arginase family. Agmatinase subfamily. Requires Mn(2+) as cofactor.

The catalysed reaction is agmatine + H2O = urea + putrescine. It participates in amine and polyamine biosynthesis; putrescine biosynthesis via agmatine pathway; putrescine from agmatine: step 1/1. Catalyzes the formation of putrescine from agmatine. This Photorhabdus laumondii subsp. laumondii (strain DSM 15139 / CIP 105565 / TT01) (Photorhabdus luminescens subsp. laumondii) protein is Agmatinase.